A 244-amino-acid chain; its full sequence is Trypsin (244 aa).

An N-terminal signal peptide occupies residues 1-15 (MKFLVILVLLGAAVA). Residues 16–21 (FEDDDK) constitute a propeptide, activation peptide. Residues 22 to 242 (IVGGFTCAKN…FVTWIQSTIS (221 aa)) enclose the Peptidase S1 domain. 6 disulfides stabilise this stretch: C28/C158, C46/C62, C130/C231, C137/C204, C169/C183, and C194/C218. H61 serves as the catalytic Charge relay system. Residues E73, N75, and E83 each contribute to the Ca(2+) site. The active-site Charge relay system is the D105. S198 serves as the catalytic Charge relay system.

The protein belongs to the peptidase S1 family. Ca(2+) is required as a cofactor.

The protein localises to the secreted. The protein resides in the extracellular space. The catalysed reaction is Preferential cleavage: Arg-|-Xaa, Lys-|-Xaa.. This chain is Trypsin, found in Xenopus laevis (African clawed frog).